A 380-amino-acid chain; its full sequence is Pregnancy-associated glycoprotein 4 (380 aa).

A signal peptide spans 1–15; that stretch reads MKWLVLLGLVAFSEC. A propeptide spans 16 to 53 (activation peptide); that stretch reads IFKIPLRRVKTMRKTLSGKNMLNDVLKEHPYRLPQISF. In terms of domain architecture, Peptidase A1 spans 71 to 377; the sequence is YVGNITIGTP…DRGNDRIGLA (307 aa). Asparagine 74 carries an N-linked (GlcNAc...) asparagine glycan. Residue aspartate 89 is part of the active site. An intrachain disulfide couples cysteine 102 to cysteine 107. The N-linked (GlcNAc...) asparagine glycan is linked to asparagine 125. Residues cysteine 261 and cysteine 265 are joined by a disulfide bond. Residue aspartate 270 is part of the active site. Cysteine 303 and cysteine 337 form a disulfide bridge.

Belongs to the peptidase A1 family. In terms of tissue distribution, trophoblast and placental tissue. Produced specifically in the invasive binucleate cells of the placenta.

Its subcellular location is the secreted. It is found in the extracellular space. In Ovis aries (Sheep), this protein is Pregnancy-associated glycoprotein 4.